The sequence spans 412 residues: Phosphoglycerate kinase (412 aa).

Substrate is bound by residues 26-28 (DFN), Arg-42, 65-68 (HLGR), Arg-133, and Arg-166. ATP contacts are provided by residues Lys-217, Gly-308, Glu-339, and 368–371 (GGDS).

Belongs to the phosphoglycerate kinase family. In terms of assembly, monomer.

Its subcellular location is the cytoplasm. The enzyme catalyses (2R)-3-phosphoglycerate + ATP = (2R)-3-phospho-glyceroyl phosphate + ADP. The protein operates within carbohydrate degradation; glycolysis; pyruvate from D-glyceraldehyde 3-phosphate: step 2/5. The sequence is that of Phosphoglycerate kinase from Synechococcus sp. (strain JA-2-3B'a(2-13)) (Cyanobacteria bacterium Yellowstone B-Prime).